The primary structure comprises 532 residues: Apolipoprotein N-acyltransferase (532 aa).

6 helical membrane-spanning segments follow: residues Ile-37–Ala-57, Trp-75–Val-95, Leu-106–Ala-126, Leu-128–Glu-148, Val-179–Leu-199, and Thr-207–Leu-227. One can recognise a CN hydrolase domain in the interval Val-245 to Ser-494. Residue Glu-289 is the Proton acceptor of the active site. Lys-353 is a catalytic residue. Residue Cys-406 is the Nucleophile of the active site. A helical membrane pass occupies residues Gly-505 to Leu-525.

The protein belongs to the CN hydrolase family. Apolipoprotein N-acyltransferase subfamily.

The protein resides in the cell inner membrane. It catalyses the reaction N-terminal S-1,2-diacyl-sn-glyceryl-L-cysteinyl-[lipoprotein] + a glycerophospholipid = N-acyl-S-1,2-diacyl-sn-glyceryl-L-cysteinyl-[lipoprotein] + a 2-acyl-sn-glycero-3-phospholipid + H(+). Its pathway is protein modification; lipoprotein biosynthesis (N-acyl transfer). In terms of biological role, catalyzes the phospholipid dependent N-acylation of the N-terminal cysteine of apolipoprotein, the last step in lipoprotein maturation. This chain is Apolipoprotein N-acyltransferase, found in Brucella suis biovar 1 (strain 1330).